We begin with the raw amino-acid sequence, 327 residues long: Transaldolase (327 aa).

Lys132 (schiff-base intermediate with substrate) is an active-site residue.

The protein belongs to the transaldolase family. Type 1 subfamily.

It localises to the cytoplasm. It carries out the reaction D-sedoheptulose 7-phosphate + D-glyceraldehyde 3-phosphate = D-erythrose 4-phosphate + beta-D-fructose 6-phosphate. Its pathway is carbohydrate degradation; pentose phosphate pathway; D-glyceraldehyde 3-phosphate and beta-D-fructose 6-phosphate from D-ribose 5-phosphate and D-xylulose 5-phosphate (non-oxidative stage): step 2/3. Its function is as follows. Transaldolase is important for the balance of metabolites in the pentose-phosphate pathway. This Chlamydia muridarum (strain MoPn / Nigg) protein is Transaldolase.